A 1517-amino-acid chain; its full sequence is Dual oxidase 2 (1517 aa).

A signal peptide spans 1-25 (MLPTSLKTLVLLGALLTGPLGPAGG). The Extracellular segment spans residues 26 to 599 (QDAPSLPREV…YFEGSGAGYG (574 aa)). A peroxidase-like; mediates peroxidase activity region spans residues 30–596 (SLPREVQRYD…VIDYFEGSGA (567 aa)). 4 N-linked (GlcNAc...) asparagine glycosylation sites follow: asparagine 100, asparagine 348, asparagine 455, and asparagine 537. Cysteine 124 and cysteine 1131 are joined by a disulfide. Residues 600 to 620 (VTLLAVCCFPVVSLIIAWVVA) form a helical membrane-spanning segment. Residues 621-1010 (RFRNRERKML…KRFVENYRRH (390 aa)) are Cytoplasmic-facing. EF-hand domains are found at residues 819 to 854 (PQDM…FMKG), 855 to 890 (SPQD…FIEI), and 899 to 934 (QLAE…HDSD). The Ca(2+) site is built by aspartate 832, aspartate 834, asparagine 836, tyrosine 838, glutamate 843, aspartate 868, aspartate 870, asparagine 872, and glutamate 879. The tract at residues 960–1214 (RVSFLTRTPG…GSYALIQLPS (255 aa)) is interaction with TXNDC11. The chain crosses the membrane as a helical span at residues 1011–1031 (IVCVTIFSAICAGLFADRAYY). Residues 1032–1046 (YGFASPPTDIEETTY) are Extracellular-facing. Residues 1047–1067 (VGIILSRGTAASISFMFSYIL) form a helical membrane-spanning segment. A Ferric oxidoreductase domain is found at 1053 to 1235 (RGTAASISFM…YVGDKLVSLS (183 aa)). Residues 1068–1100 (LTMCRNLITFLRETFLNRYIPFDAAVDFHRWIA) are Cytoplasmic-facing. A helical membrane pass occupies residues 1101–1121 (MAAVVLAVVHSLGHAVNVYIF). Residues 1122-1154 (SVSPLSLMTCVFPSVFVNDGSKLPPKYYWWFFE) are Extracellular-facing. A helical membrane pass occupies residues 1155 to 1175 (TVPGMTGVLLLLVLAIMYVFA). The Cytoplasmic segment spans residues 1176 to 1185 (SHHFRRHSFR). Residues 1186–1206 (GFWLTHHLYVVLYALIIIHGS) traverse the membrane as a helical segment. Residue tyrosine 1207 is a topological domain, extracellular. The helical transmembrane segment at 1208 to 1228 (ALIQLPSFHIYFLVPAIIYVG) threads the bilayer. Topologically, residues 1229–1517 (DKLVSLSRKK…AHFVHHYENF (289 aa)) are cytoplasmic. The FAD-binding FR-type domain maps to 1236 to 1342 (RKKVEISVVK…DGPFGEGHQE (107 aa)).

It in the N-terminal section; belongs to the peroxidase family. As to quaternary structure, heterodimer with DUOXA2; disulfide-linked. Interacts with TXNDC11, TPO and CYBA. Post-translationally, N-glycosylated. Expressed in colon, duodenum, rectum and thyroid.

It is found in the apical cell membrane. It localises to the cell junction. It carries out the reaction NADH + O2 + H(+) = H2O2 + NAD(+). It catalyses the reaction NADPH + O2 + H(+) = H2O2 + NADP(+). It functions in the pathway hormone biosynthesis; thyroid hormone biosynthesis. The NADPH oxidase activity is calcium-dependent. Peroxidase activity is inhibited by aminobenzohydrazide. Its function is as follows. Generates hydrogen peroxide which is required for the activity of thyroid peroxidase/TPO and lactoperoxidase/LPO. Plays a role in thyroid hormones synthesis and lactoperoxidase-mediated antimicrobial defense at the surface of mucosa. May have its own peroxidase activity through its N-terminal peroxidase-like domain. In Rattus norvegicus (Rat), this protein is Dual oxidase 2 (Duox2).